Reading from the N-terminus, the 174-residue chain is Protein MOTHER of FT and TFL1 homolog 2 (174 aa).

Belongs to the phosphatidylethanolamine-binding protein family.

Its function is as follows. May form complexes with phosphorylated ligands by interfering with kinases and their effectors. The chain is Protein MOTHER of FT and TFL1 homolog 2 from Oryza sativa subsp. japonica (Rice).